Consider the following 116-residue polypeptide: Ribosome-binding factor A (116 aa).

It belongs to the RbfA family. As to quaternary structure, monomer. Binds 30S ribosomal subunits, but not 50S ribosomal subunits or 70S ribosomes.

It is found in the cytoplasm. In terms of biological role, one of several proteins that assist in the late maturation steps of the functional core of the 30S ribosomal subunit. Associates with free 30S ribosomal subunits (but not with 30S subunits that are part of 70S ribosomes or polysomes). Required for efficient processing of 16S rRNA. May interact with the 5'-terminal helix region of 16S rRNA. This Ureaplasma parvum serovar 3 (strain ATCC 27815 / 27 / NCTC 11736) protein is Ribosome-binding factor A.